Consider the following 113-residue polypeptide: Small ribosomal subunit protein uS17 (113 aa).

Belongs to the universal ribosomal protein uS17 family. As to quaternary structure, part of the 30S ribosomal subunit.

One of the primary rRNA binding proteins, it binds specifically to the 5'-end of 16S ribosomal RNA. This Pyrococcus furiosus (strain ATCC 43587 / DSM 3638 / JCM 8422 / Vc1) protein is Small ribosomal subunit protein uS17.